The primary structure comprises 501 residues: ATP synthase subunit alpha (501 aa).

169-176 (GDRQTGKT) contributes to the ATP binding site.

Belongs to the ATPase alpha/beta chains family. As to quaternary structure, F-type ATPases have 2 components, CF(1) - the catalytic core - and CF(0) - the membrane proton channel. CF(1) has five subunits: alpha(3), beta(3), gamma(1), delta(1), epsilon(1). CF(0) has three main subunits: a(1), b(2) and c(9-12). The alpha and beta chains form an alternating ring which encloses part of the gamma chain. CF(1) is attached to CF(0) by a central stalk formed by the gamma and epsilon chains, while a peripheral stalk is formed by the delta and b chains.

It localises to the cell membrane. The catalysed reaction is ATP + H2O + 4 H(+)(in) = ADP + phosphate + 5 H(+)(out). In terms of biological role, produces ATP from ADP in the presence of a proton gradient across the membrane. The alpha chain is a regulatory subunit. This is ATP synthase subunit alpha from Streptococcus gordonii (strain Challis / ATCC 35105 / BCRC 15272 / CH1 / DL1 / V288).